The primary structure comprises 542 residues: Carboxypeptidase Y (542 aa).

An N-terminal signal peptide occupies residues 1–21 (MKLSKSTLIATLALTATSTNA). Positions 22-127 (LVVQNPFSNI…DAQVPNHKLR (106 aa)) are excised as a propeptide. 5 disulfide bridges follow: Cys-182–Cys-421, Cys-316–Cys-330, Cys-340–Cys-363, Cys-347–Cys-356, and Cys-385–Cys-391. Asn-213 carries N-linked (GlcNAc...) asparagine glycosylation. The active site involves Ser-269. The N-linked (GlcNAc...) asparagine glycan is linked to Asn-291. Asp-461 is a catalytic residue. Substrate is bound at residue Cys-464. His-518 is a catalytic residue. Met-519 contributes to the substrate binding site.

The protein belongs to the peptidase S10 family.

The protein localises to the vacuole. It carries out the reaction Release of a C-terminal amino acid with broad specificity.. Involved in degradation of small peptides. This chain is Carboxypeptidase Y (CPY1), found in Candida albicans (Yeast).